Reading from the N-terminus, the 159-residue chain is Dihydrofolate reductase (159 aa).

Positions 1 to 158 constitute a DHFR domain; the sequence is MISLIAALAV…HSYCFEILER (158 aa). Ile-5 is a binding site for substrate. NADP(+) contacts are provided by residues Ala-7 and 13–19; that span reads VIGMENA. Asp-27 serves as a coordination point for substrate. Residue 45–46 coordinates NADP(+); that stretch reads HT. Substrate-binding residues include Arg-52 and Arg-57. NADP(+)-binding positions include 63-64, Lys-76, and 95-102; these read SS and GGGRVYEQ. Thr-113 provides a ligand contact to substrate.

It belongs to the dihydrofolate reductase family.

It carries out the reaction (6S)-5,6,7,8-tetrahydrofolate + NADP(+) = 7,8-dihydrofolate + NADPH + H(+). It participates in cofactor biosynthesis; tetrahydrofolate biosynthesis; 5,6,7,8-tetrahydrofolate from 7,8-dihydrofolate: step 1/1. Its function is as follows. Key enzyme in folate metabolism. Catalyzes an essential reaction for de novo glycine and purine synthesis, and for DNA precursor synthesis. The polypeptide is Dihydrofolate reductase (folA) (Escherichia coli O6:H1 (strain CFT073 / ATCC 700928 / UPEC)).